The sequence spans 369 residues: Small ribosomal subunit biogenesis GTPase RsgA (369 aa).

A CP-type G domain is found at Gly-116–Ile-271. Residues Asn-161–Asp-164 and Gly-213–Thr-221 contribute to the GTP site. Positions 294, 299, 301, and 307 each coordinate Zn(2+).

Belongs to the TRAFAC class YlqF/YawG GTPase family. RsgA subfamily. As to quaternary structure, monomer. Associates with 30S ribosomal subunit, binds 16S rRNA. The cofactor is Zn(2+).

The protein localises to the cytoplasm. Functionally, one of several proteins that assist in the late maturation steps of the functional core of the 30S ribosomal subunit. Helps release RbfA from mature subunits. May play a role in the assembly of ribosomal proteins into the subunit. Circularly permuted GTPase that catalyzes slow GTP hydrolysis, GTPase activity is stimulated by the 30S ribosomal subunit. The sequence is that of Small ribosomal subunit biogenesis GTPase RsgA from Methanosarcina acetivorans (strain ATCC 35395 / DSM 2834 / JCM 12185 / C2A).